The following is a 545-amino-acid chain: Toxin BC_0920 (545 aa).

The LXG domain occupies 1-217 (MSLNMYLGEV…ARQAANSIEE (217 aa)).

In the N-terminal section; belongs to the LXG family. This sequence in the C-terminal section; belongs to the bacterial EndoU family. As to quaternary structure, probably interacts with cognate immunity protein BC_0921. The interaction inhibits the toxic activity of BC_0921.

The protein localises to the secreted. Functionally, toxic component of an LXG toxin-immunity module. The C-terminus (residues 322-545) has RNase activity in E.coli which is neutralized by cognate immunity protein BC_0921, but not by immunity proteins specific to other toxins with the LXG domain. Degrades 5S rRNA and several tRNAs in vitro; cleavage is endonucleolytic within the anticodon loop for tRNA(GAU-Ile) and tRNA(UUC-Glu) but total for 5S rRNA and at least one other tRNA. RNase activity is suppressed by cognate immunity protein BC_0921. This chain is Toxin BC_0920, found in Bacillus cereus (strain ATCC 14579 / DSM 31 / CCUG 7414 / JCM 2152 / NBRC 15305 / NCIMB 9373 / NCTC 2599 / NRRL B-3711).